The following is a 172-amino-acid chain: MKNARTTLIAAAIAGTLVTTSPAGIANADDAGLDPNAAAGPDAVGFDPNLPPAPDAAPVDTPPAPEDAGFDPNLPPPLAPDFLSPPAEEAPPVPVAYSVNWDAIAQCESGGNWSINTGNGYYGGLRFTAGTWRANGGSGSAANASREEQIRVAENVLRSQGIRAWPVCGRRG.

The N-terminal stretch at 1-28 (MKNARTTLIAAAIAGTLVTTSPAGIANA) is a signal peptide. A disordered region spans residues 33-89 (LDPNAAAGPDAVGFDPNLPPAPDAAPVDTPPAPEDAGFDPNLPPPLAPDFLSPPAEE). Residues 49-65 (NLPPAPDAAPVDTPPAP) are compositionally biased toward pro residues.

This sequence belongs to the transglycosylase family. Rpf subfamily. Interacts with RipA.

Its function is as follows. Factor that stimulates resuscitation of dormant cells. Has peptidoglycan (PG) hydrolytic activity. Active in the pM concentration range. Has little to no effect on actively-growing cells. PG fragments could either directly activate the resuscitation pathway of dormant bacteria or serve as a substrate for endogenous Rpf, resulting in low molecular weight products with resuscitation activity. Stimulates growth of stationary phase M.bovis (a slow-growing Mycobacterium), reduces the lag phase of diluted fast-growers M.smegmatis and Micrococcus luteus. Sequential gene disruption indicates RpfB and RpfE are higher than RpfD and RpfC in functional hierarchy. The protein is Resuscitation-promoting factor RpfE (rpfE) of Mycobacterium tuberculosis (strain ATCC 25618 / H37Rv).